The chain runs to 86 residues: Conotoxin S6.10 (86 aa).

Residues 1–22 form the signal peptide; sequence MKLTCVLIIAVLFLTACQLATA. A propeptide spanning residues 23–45 is cleaved from the precursor; sequence KTYSKGRQKHRALRSTDKNIKLT. Cystine bridges form between Cys48/Cys62, Cys55/Cys66, and Cys61/Cys73.

It belongs to the conotoxin O1 superfamily. As to expression, expressed by the venom duct.

The protein resides in the secreted. The polypeptide is Conotoxin S6.10 (Conus striatus (Striated cone)).